A 425-amino-acid chain; its full sequence is Dihydroorotase (425 aa).

Zn(2+) contacts are provided by His59 and His61. Substrate is bound by residues 61 to 63 (HLR) and Asn93. The Zn(2+) site is built by Asp151, His178, and His231. Residue Asn277 coordinates substrate. Asp304 lines the Zn(2+) pocket. Asp304 is a catalytic residue. Residues His308 and 322–323 (FG) each bind substrate.

It belongs to the metallo-dependent hydrolases superfamily. DHOase family. Class I DHOase subfamily. It depends on Zn(2+) as a cofactor.

It catalyses the reaction (S)-dihydroorotate + H2O = N-carbamoyl-L-aspartate + H(+). It functions in the pathway pyrimidine metabolism; UMP biosynthesis via de novo pathway; (S)-dihydroorotate from bicarbonate: step 3/3. Catalyzes the reversible cyclization of carbamoyl aspartate to dihydroorotate. This Staphylococcus epidermidis (strain ATCC 35984 / DSM 28319 / BCRC 17069 / CCUG 31568 / BM 3577 / RP62A) protein is Dihydroorotase.